The sequence spans 207 residues: Small ribosomal subunit protein uS4 (207 aa).

The segment at 31–56 (KCKLDSKPGQHGRTSGARTSDYGNQL) is disordered. Polar residues predominate over residues 42–53 (GRTSGARTSDYG). The S4 RNA-binding domain occupies 97 to 157 (ARLDNVVYRM…EKSKKQVRIV (61 aa)).

The protein belongs to the universal ribosomal protein uS4 family. As to quaternary structure, part of the 30S ribosomal subunit. Contacts protein S5. The interaction surface between S4 and S5 is involved in control of translational fidelity.

In terms of biological role, one of the primary rRNA binding proteins, it binds directly to 16S rRNA where it nucleates assembly of the body of the 30S subunit. With S5 and S12 plays an important role in translational accuracy. In Janthinobacterium sp. (strain Marseille) (Minibacterium massiliensis), this protein is Small ribosomal subunit protein uS4.